A 545-amino-acid polypeptide reads, in one-letter code: MPDRTALPRAMLAAWVLLLLAACSQGPAPTPPASWGWQDASGERAIAPDEAYPELFQAVQENRLFSDQKHFVDALPLREPARIRADYLRERERPGFDLRAFVGRNFEESGSVETAPPEAGADLASHISDLWPALTRHYEQVPAHSSLLPLPKPYVVPGGRFREVYYWDSYFTMLGLAESGQHQRVRDMLDNFAYLIDTYGHIPNGNRSYYLSRSQPPFFAYMVDLQARREGDAAYRRYLPQLQKEYAYWMEGSAGLRPNEARLHVVKLADGSLLNRYWDNRDTPRQESFLEDRATAARAPQRPAGEVYRDLRAGAESGWDFSSRWLDDGRELASIRTTAIVPVDLNALLYHLERIIAKACASSALKACEQGYGARAEKRRQAIEDHLWHPAGYYADYDWQRRRPIERINAASLFPLFTGLASAERAGRTADSVAAQLLRPGGLATTTRASGQQWDEPNGWAPLQWVAVQGLRAYGRDALAEDIGRRFLAQVQQVYDREGKLVEKYDISGNQGGGGGGEYPLQDGFGWSNGVTLQLLRLYGPGAGR.

The first 30 residues, 1 to 30, serve as a signal peptide directing secretion; it reads MPDRTALPRAMLAAWVLLLLAACSQGPAPT. Substrate is bound by residues arginine 160, 167 to 168, asparagine 204, 213 to 215, 285 to 287, and glycine 318; these read WD, RSQ, and RQE. Active-site proton donor/acceptor residues include aspartate 320 and glutamate 503. Residue glutamate 518 participates in substrate binding.

The protein belongs to the glycosyl hydrolase 37 family.

The protein resides in the periplasm. The enzyme catalyses alpha,alpha-trehalose + H2O = alpha-D-glucose + beta-D-glucose. Provides the cells with the ability to utilize trehalose at high osmolarity by splitting it into glucose molecules that can subsequently be taken up by the phosphotransferase-mediated uptake system. This chain is Periplasmic trehalase, found in Pseudomonas aeruginosa (strain ATCC 15692 / DSM 22644 / CIP 104116 / JCM 14847 / LMG 12228 / 1C / PRS 101 / PAO1).